Consider the following 447-residue polypeptide: MAQKLWEKSVEVNKDIERFTVGRDREMDLYLAKHDVLGSMAHITMLESIGLLTKEELAQLLTELKDIYASAERGEFVIEEGVEDVHSQVELMLTRRLGDVGKKIHSGRSRNDQVLLDLKLFTRTQIREVAEAVEQLFHVLIRQSERYKNVLMPGYTHLQIAMPSSFGLWFGAYAESLVDDMLFLQAAFKMCNKNPLGSAAGYGSSFPLNRTMTTELLGFDSLNYNVVYAQMGRGKMERNVAFALATLAGTISKLAFDACMFNSQNFGFVKLPDECTTGSSIMPHKKNPDVFELTRAKCNKLQSLPQQIMMIANNLPSGYFRDLQIIKEVFLPAFQELKDCLQMTTYIMNEIKVNEHILDDDKYLFIFSVEEVNRLAREGMPFRDAYKKVGLDIEAGHFSHDKQVHHTHEGSIGNLCNDEISALMQRTIEGFNFQGMEQAEKTLLGRK.

It belongs to the lyase 1 family. Argininosuccinate lyase subfamily.

It localises to the cytoplasm. It carries out the reaction 2-(N(omega)-L-arginino)succinate = fumarate + L-arginine. The protein operates within amino-acid biosynthesis; L-arginine biosynthesis; L-arginine from L-ornithine and carbamoyl phosphate: step 3/3. This Bacteroides fragilis (strain YCH46) protein is Argininosuccinate lyase.